The chain runs to 316 residues: Beta-ketoacyl-[acyl-carrier-protein] synthase III 1 (316 aa).

Residues C112 and H243 contribute to the active site. Residues 244 to 248 (QANYR) are ACP-binding. N273 is a catalytic residue.

Belongs to the thiolase-like superfamily. FabH family. Homodimer.

It is found in the cytoplasm. The enzyme catalyses malonyl-[ACP] + acetyl-CoA + H(+) = 3-oxobutanoyl-[ACP] + CO2 + CoA. It functions in the pathway lipid metabolism; fatty acid biosynthesis. Functionally, catalyzes the condensation reaction of fatty acid synthesis by the addition to an acyl acceptor of two carbons from malonyl-ACP. Catalyzes the first condensation reaction which initiates fatty acid synthesis and may therefore play a role in governing the total rate of fatty acid production. Possesses both acetoacetyl-ACP synthase and acetyl transacylase activities. Its substrate specificity determines the biosynthesis of branched-chain and/or straight-chain of fatty acids. This Vibrio vulnificus (strain YJ016) protein is Beta-ketoacyl-[acyl-carrier-protein] synthase III 1.